A 153-amino-acid chain; its full sequence is 17.3 kDa class I heat shock protein (153 aa).

A sHSP domain is found at 39–153 (ENSAFVSTRV…PDVKAIDISG (115 aa)).

Belongs to the small heat shock protein (HSP20) family. In terms of assembly, forms oligomeric structures.

The protein localises to the cytoplasm. This is 17.3 kDa class I heat shock protein (HSP17.3-B) from Glycine max (Soybean).